The chain runs to 889 residues: DNA-directed RNA polymerase subunit Rpo1N (889 aa).

Residues C62, C65, C72, H75, C102, C105, C149, and C152 each coordinate Zn(2+). D466, D468, and D470 together coordinate Mg(2+).

The protein belongs to the RNA polymerase beta' chain family. As to quaternary structure, part of the RNA polymerase complex. Mg(2+) serves as cofactor. The cofactor is Zn(2+).

It localises to the cytoplasm. The enzyme catalyses RNA(n) + a ribonucleoside 5'-triphosphate = RNA(n+1) + diphosphate. Its function is as follows. DNA-dependent RNA polymerase (RNAP) catalyzes the transcription of DNA into RNA using the four ribonucleoside triphosphates as substrates. Forms the clamp head domain. This chain is DNA-directed RNA polymerase subunit Rpo1N, found in Methanococcus vannielii (strain ATCC 35089 / DSM 1224 / JCM 13029 / OCM 148 / SB).